We begin with the raw amino-acid sequence, 102 residues long: Large ribosomal subunit protein bL21 (102 aa).

This sequence belongs to the bacterial ribosomal protein bL21 family. In terms of assembly, part of the 50S ribosomal subunit. Contacts protein L20.

Functionally, this protein binds to 23S rRNA in the presence of protein L20. This is Large ribosomal subunit protein bL21 from Oleidesulfovibrio alaskensis (strain ATCC BAA-1058 / DSM 17464 / G20) (Desulfovibrio alaskensis).